The primary structure comprises 208 residues: Probable GTP-binding protein EngB (208 aa).

Positions 23-205 (LTSEMVVLGR…RQTLLKHLLT (183 aa)) constitute an EngB-type G domain. GTP contacts are provided by residues 31–38 (GRSNVGKS), 57–61 (GKTRL), 84–87 (DLPG), 154–157 (TKFD), and 182–184 (FNA). The Mg(2+) site is built by S38 and T59.

This sequence belongs to the TRAFAC class TrmE-Era-EngA-EngB-Septin-like GTPase superfamily. EngB GTPase family. Requires Mg(2+) as cofactor.

Functionally, necessary for normal cell division and for the maintenance of normal septation. The chain is Probable GTP-binding protein EngB from Helicobacter pylori (strain ATCC 700392 / 26695) (Campylobacter pylori).